Here is a 98-residue protein sequence, read N- to C-terminus: Large ribosomal subunit protein bL21 (98 aa).

The protein belongs to the bacterial ribosomal protein bL21 family. As to quaternary structure, part of the 50S ribosomal subunit. Contacts protein L20.

This protein binds to 23S rRNA in the presence of protein L20. This is Large ribosomal subunit protein bL21 from Chloroherpeton thalassium (strain ATCC 35110 / GB-78).